The primary structure comprises 326 residues: Malate dehydrogenase (326 aa).

11–17 (GAAGQIG) provides a ligand contact to NAD(+). Positions 92 and 98 each coordinate substrate. Residues asparagine 105, glutamine 112, and 129-131 (VGN) each bind NAD(+). Residues asparagine 131 and arginine 162 each coordinate substrate. Histidine 187 serves as the catalytic Proton acceptor.

The protein belongs to the LDH/MDH superfamily. MDH type 2 family.

It catalyses the reaction (S)-malate + NAD(+) = oxaloacetate + NADH + H(+). Catalyzes the reversible oxidation of malate to oxaloacetate. This Chromobacterium violaceum (strain ATCC 12472 / DSM 30191 / JCM 1249 / CCUG 213 / NBRC 12614 / NCIMB 9131 / NCTC 9757 / MK) protein is Malate dehydrogenase.